Reading from the N-terminus, the 223-residue chain is Thymidylate kinase (223 aa).

7 to 14 is a binding site for ATP; it reads GIDGAGKS.

It belongs to the thymidylate kinase family.

The enzyme catalyses dTMP + ATP = dTDP + ADP. Phosphorylation of dTMP to form dTDP in both de novo and salvage pathways of dTTP synthesis. This is Thymidylate kinase from Prosthecochloris aestuarii (strain DSM 271 / SK 413).